A 224-amino-acid chain; its full sequence is Ankyrin repeat domain-containing protein 45 (224 aa).

ANK repeat units lie at residues 46 to 76 and 80 to 109; these read VGRN…DVNE and RGYS…DFQA.

Widely expressed.

Its subcellular location is the cytoplasm. The protein resides in the midbody. It localises to the midbody ring. It is found in the cleavage furrow. In terms of biological role, may play a role during cell division. In Danio rerio (Zebrafish), this protein is Ankyrin repeat domain-containing protein 45.